The sequence spans 155 residues: Alanine- and arginine-rich domain-containing protein (155 aa).

The sequence is that of Alanine- and arginine-rich domain-containing protein (AARD) from Homo sapiens (Human).